A 135-amino-acid chain; its full sequence is Transcription antitermination protein NusB (135 aa).

It belongs to the NusB family.

Its function is as follows. Involved in transcription antitermination. Required for transcription of ribosomal RNA (rRNA) genes. Binds specifically to the boxA antiterminator sequence of the ribosomal RNA (rrn) operons. The chain is Transcription antitermination protein NusB from Lacticaseibacillus paracasei (strain ATCC 334 / BCRC 17002 / CCUG 31169 / CIP 107868 / KCTC 3260 / NRRL B-441) (Lactobacillus paracasei).